The chain runs to 359 residues: Membrane-bound lytic murein transglycosylase C (359 aa).

Residues 1–16 form the signal peptide; it reads MKKYLALALIAPLLIS. C17 is lipidated: N-palmitoyl cysteine. Residue C17 is the site of S-diacylglycerol cysteine attachment.

It belongs to the transglycosylase Slt family.

Its subcellular location is the cell outer membrane. It carries out the reaction Exolytic cleavage of the (1-&gt;4)-beta-glycosidic linkage between N-acetylmuramic acid (MurNAc) and N-acetylglucosamine (GlcNAc) residues in peptidoglycan, from either the reducing or the non-reducing ends of the peptidoglycan chains, with concomitant formation of a 1,6-anhydrobond in the MurNAc residue.. Functionally, murein-degrading enzyme. May play a role in recycling of muropeptides during cell elongation and/or cell division. This Escherichia coli O157:H7 protein is Membrane-bound lytic murein transglycosylase C.